The primary structure comprises 296 residues: Nucleotide-binding protein Spy49_0545 (296 aa).

Position 13-20 (13-20 (GMSGAGKT)) interacts with ATP. 63–66 (DMRS) contributes to the GTP binding site.

The protein belongs to the RapZ-like family.

In terms of biological role, displays ATPase and GTPase activities. In Streptococcus pyogenes serotype M49 (strain NZ131), this protein is Nucleotide-binding protein Spy49_0545.